The chain runs to 288 residues: Probable prolyl 4-hydroxylase 6 (288 aa).

The Cytoplasmic portion of the chain corresponds to 1-4 (MDSQ). The helical; Signal-anchor for type II membrane protein transmembrane segment at 5–27 (YFLAFSLSLLLIFSQISSFSFSV) threads the bilayer. At 28–288 (DPTRITQLSW…GFCRKSCKAC (261 aa)) the chain is on the lumenal side. One can recognise a Fe2OG dioxygenase domain in the interval 116–238 (NGEALQILHY…KWSATRWIHV (123 aa)). Fe cation contacts are provided by H134 and D136. N-linked (GlcNAc...) asparagine glycosylation is found at N160 and N210. Fe cation is bound at residue H219. K229 is a binding site for 2-oxoglutarate. One can recognise a ShKT domain in the interval 248-288 (CVDDHESCQEWADAGECEKNPMYMVGSETSLGFCRKSCKAC). Cystine bridges form between C248–C288, C255–C281, and C264–C285.

It belongs to the P4HA family. Fe(2+) serves as cofactor. The cofactor is L-ascorbate.

Its subcellular location is the endoplasmic reticulum membrane. The enzyme catalyses L-prolyl-[collagen] + 2-oxoglutarate + O2 = trans-4-hydroxy-L-prolyl-[collagen] + succinate + CO2. Catalyzes the post-translational formation of 4-hydroxyproline in -Xaa-Pro-Gly- sequences in proline-rich peptide sequences of plant glycoproteins and other proteins. Hydroxyprolines are important constituent of many plant cell wall glycoproteins such as extensins, hydroxyproline-rich glycoproteins, lectins and arabinogalactan proteins. The sequence is that of Probable prolyl 4-hydroxylase 6 from Arabidopsis thaliana (Mouse-ear cress).